The chain runs to 62 residues: Large ribosomal subunit protein eL24 (62 aa).

Zn(2+) contacts are provided by C7, C10, C33, and C37. A C4-type zinc finger spans residues 7 to 37; sequence CSFCGREIEPGTGIMYVKNDGSILWFCSRKC.

Belongs to the eukaryotic ribosomal protein eL24 family. In terms of assembly, part of the 50S ribosomal subunit. Forms a cluster with proteins L3 and L14. The cofactor is Zn(2+).

Binds to the 23S rRNA. The protein is Large ribosomal subunit protein eL24 of Staphylothermus marinus (strain ATCC 43588 / DSM 3639 / JCM 9404 / F1).